Here is a 1388-residue protein sequence, read N- to C-terminus: Rho-associated protein kinase 2 (1388 aa).

The tract at residues 1 to 24 is disordered; sequence MSRPPPTGKMPGAPEAAAGDGAGA. Residues 92-354 enclose the Protein kinase domain; it reads YDVVKVIGRG…VEEIKSASFF (263 aa). ATP-binding positions include 98–106 and Lys121; that span reads IGRGAFGEV. Catalysis depends on Asp214, which acts as the Proton acceptor. Residues 357-425 form the AGC-kinase C-terminal domain; that stretch reads DQWNWDNIRE…FRENLLLSDS (69 aa). Positions 363 to 784 are interaction with PPP1R12A; sequence NIRETAAPVV…LNELLKQKDV (422 aa). The interaction with NPM1 stretch occupies residues 373-420; it reads PELSSDIDSSNFDDIEDDKGDVETFPIPKAFVGNQLPFIGFTYFRENL. Residue Thr414 is modified to Phosphothreonine; by ROCK2. Coiled coils occupy residues 439–1024 and 1052–1131; these read SEES…EKQL and SDTD…IGMD. One can recognise an REM-1 domain in the interval 497–573; sequence TLRQLEREKA…LDEANALLRT (77 aa). Residues 513–530 are compositionally biased toward basic and acidic residues; it reads AEYQRKADHEADKKRNLE. A disordered region spans residues 513–532; it reads AEYQRKADHEADKKRNLEND. Tyr722 bears the Phosphotyrosine; by SRC mark. Positions 979-1047 constitute a RhoBD domain; the sequence is TSDVANLANE…LAEIMNRKEP (69 aa). The tract at residues 979–1047 is RHOA binding; it reads TSDVANLANE…LAEIMNRKEP (69 aa). Ser1137 bears the Phosphoserine mark. The region spanning 1150–1349 is the PH domain; the sequence is ESRLEGWLSL…WVSRLVKKIP (200 aa). The residue at position 1212 (Thr1212) is a Phosphothreonine. A Phorbol-ester/DAG-type zinc finger spans residues 1260–1315; it reads GHEFIPTLYHFPTNCEACMKPLWHMFKPPPALECSRCHIKCHKDHMDKKEEIIAPC. The segment at 1345–1388 is disordered; the sequence is VKKIPKKPPAPDPFARSSPRTSMKIQQNQSIRRPSRQLAPNKPS. Residues Ser1362 and Ser1374 each carry the phosphoserine modification. Positions 1362 to 1376 are enriched in polar residues; the sequence is SPRTSMKIQQNQSIR.

The protein belongs to the protein kinase superfamily. AGC Ser/Thr protein kinase family. In terms of assembly, homodimer. Interacts with IRS1. Interacts with RAF1. Interacts with RHOA (activated by GTP), RHOB, RHOC. Interacts with PPP1R12A. Interacts with EP300. Interacts with CHORDC1. Interacts with BRCA2. Interacts with NPM1; this interaction enhances its activity. Interacts with SORL1. Interacts with PJVK. Mg(2+) serves as cofactor. Post-translationally, autophosphorylated. Phosphorylation at Tyr-722 reduces its binding to RHOA and is crucial for focal adhesion dynamics. Dephosphorylation by PTPN11 stimulates its RHOA binding activity. In terms of processing, cleaved by granzyme B during apoptosis. This leads to constitutive activation of the kinase and membrane blebbing. Highly expressed in brain, lung, liver, skeletal muscle, kidney and testis.

Its subcellular location is the cytoplasm. It localises to the cell membrane. The protein localises to the nucleus. It is found in the cytoskeleton. The protein resides in the microtubule organizing center. Its subcellular location is the centrosome. It carries out the reaction L-seryl-[protein] + ATP = O-phospho-L-seryl-[protein] + ADP + H(+). The enzyme catalyses L-threonyl-[protein] + ATP = O-phospho-L-threonyl-[protein] + ADP + H(+). With respect to regulation, activated by RHOA binding. Inhibited by Y-27632. Its function is as follows. Protein kinase which is a key regulator of actin cytoskeleton and cell polarity. Involved in regulation of smooth muscle contraction, actin cytoskeleton organization, stress fiber and focal adhesion formation, neurite retraction, cell adhesion and motility via phosphorylation of ADD1, BRCA2, CNN1, EZR, DPYSL2, EP300, MSN, MYL9/MLC2, NPM1, RDX, PPP1R12A and VIM. Phosphorylates SORL1 and IRF4. Acts as a negative regulator of VEGF-induced angiogenic endothelial cell activation. Positively regulates the activation of p42/MAPK1-p44/MAPK3 and of p90RSK/RPS6KA1 during myogenic differentiation. Plays an important role in the timely initiation of centrosome duplication. Inhibits keratinocyte terminal differentiation. May regulate closure of the eyelids and ventral body wall through organization of actomyosin bundles. Plays a critical role in the regulation of spine and synaptic properties in the hippocampus. Plays a role in placental homeostasis during the perinatal period. Plays an important role in generating the circadian rhythm of the aortic myofilament Ca(2+) sensitivity and vascular contractility by modulating the myosin light chain phosphorylation. This is Rho-associated protein kinase 2 (Rock2) from Rattus norvegicus (Rat).